Reading from the N-terminus, the 212-residue chain is Guanylate kinase (212 aa).

The 183-residue stretch at 5–187 folds into the Guanylate kinase-like domain; the sequence is GILCIISAPS…ALMHLQSIML (183 aa). 12–19 serves as a coordination point for ATP; sequence APSGTGKS.

It belongs to the guanylate kinase family.

The protein resides in the cytoplasm. The catalysed reaction is GMP + ATP = GDP + ADP. Functionally, essential for recycling GMP and indirectly, cGMP. This chain is Guanylate kinase, found in Blochmanniella pennsylvanica (strain BPEN).